The following is a 424-amino-acid chain: Endoglucanase 1 (424 aa).

The first 18 residues, 1 to 18 (MAKFSALCSLALLGLATA), serve as a signal peptide directing secretion. Cystine bridges form between C35-C41, C68-C90, C80-C86, C156-C384, C188-C211, C192-C210, C231-C250, C239-C244, and C255-C331. A glycan (N-linked (GlcNAc...) asparagine) is linked at N76. Residue E213 is the Nucleophile of the active site. E218 (proton donor) is an active-site residue. N-linked (GlcNAc...) asparagine glycosylation is found at N271 and N385.

This sequence belongs to the glycosyl hydrolase 7 (cellulase C) family. In terms of assembly, monomer.

Its subcellular location is the secreted. The catalysed reaction is Endohydrolysis of (1-&gt;4)-beta-D-glucosidic linkages in cellulose, lichenin and cereal beta-D-glucans.. Its function is as follows. Endoglucanase that is involved in the biological conversion of cellulose to glucose. Hydrolyzes internal beta-1,4-glucosidic bonds. This chain is Endoglucanase 1, found in Pyricularia oryzae (strain 70-15 / ATCC MYA-4617 / FGSC 8958) (Rice blast fungus).